The following is a 214-amino-acid chain: Variable small protein 1 (214 aa).

A signal peptide spans 1–18; the sequence is MRKRISAIIMTLFMVFMS. Cysteine 19 carries the N-palmitoyl cysteine lipid modification. A lipid anchor (S-diacylglycerol cysteine) is attached at cysteine 19.

Belongs to the variable small protein (Vsp) family.

The protein localises to the cell outer membrane. The Vlp and Vsp proteins are antigenically distinct proteins, only one vlp or vsp gene is transcriptionally active at any one time. Switching between these genes is a mechanism of host immune response evasion. In Borrelia hermsii, this protein is Variable small protein 1.